A 237-amino-acid polypeptide reads, in one-letter code: MRQHVNPLSRFFQLPLELPAPEQLFDDPGRPIHLDIGCARGICLQELAALRPDRNHLGVEIRRPLVRSAQRDRDQLERLNLHYLFCNANVSLEGWMAALPQDRLQLVSIQFPDPWFKRRHRKRRVLQPSLLLAIAATLQPGRELFVQSDVLAVIDPMVALVELSGCFDRPAEDARPWRADNPLPVPTERERYVQELGLPAYRVLYRRNRQPLPDPEELEIAWQRVDNPANDAVPPDG.

Positions 35, 60, 87, and 113 each coordinate S-adenosyl-L-methionine. Aspartate 113 is a catalytic residue. 2 residues coordinate substrate: lysine 117 and aspartate 149.

Belongs to the class I-like SAM-binding methyltransferase superfamily. TrmB family.

It carries out the reaction guanosine(46) in tRNA + S-adenosyl-L-methionine = N(7)-methylguanosine(46) in tRNA + S-adenosyl-L-homocysteine. The protein operates within tRNA modification; N(7)-methylguanine-tRNA biosynthesis. Its function is as follows. Catalyzes the formation of N(7)-methylguanine at position 46 (m7G46) in tRNA. This is tRNA (guanine-N(7)-)-methyltransferase from Synechococcus sp. (strain WH7803).